Here is a 460-residue protein sequence, read N- to C-terminus: Bifunctional protein GlmU (460 aa).

The tract at residues methionine 1–arginine 229 is pyrophosphorylase. UDP-N-acetyl-alpha-D-glucosamine contacts are provided by residues leucine 8–glycine 11, lysine 22, glutamine 72, and glycine 77–threonine 78. Aspartate 102 serves as a coordination point for Mg(2+). UDP-N-acetyl-alpha-D-glucosamine contacts are provided by glycine 139, glutamate 154, asparagine 169, and asparagine 227. Asparagine 227 lines the Mg(2+) pocket. The segment at valine 230–asparagine 250 is linker. Residues glycine 251–lysine 460 form an N-acetyltransferase region. Positions 332 and 350 each coordinate UDP-N-acetyl-alpha-D-glucosamine. The Proton acceptor role is filled by histidine 362. UDP-N-acetyl-alpha-D-glucosamine-binding residues include tyrosine 365 and asparagine 376. Acetyl-CoA-binding positions include alanine 379, asparagine 385–tyrosine 386, serine 404, alanine 422, and arginine 439.

In the N-terminal section; belongs to the N-acetylglucosamine-1-phosphate uridyltransferase family. It in the C-terminal section; belongs to the transferase hexapeptide repeat family. In terms of assembly, homotrimer. Mg(2+) is required as a cofactor.

It localises to the cytoplasm. It carries out the reaction alpha-D-glucosamine 1-phosphate + acetyl-CoA = N-acetyl-alpha-D-glucosamine 1-phosphate + CoA + H(+). It catalyses the reaction N-acetyl-alpha-D-glucosamine 1-phosphate + UTP + H(+) = UDP-N-acetyl-alpha-D-glucosamine + diphosphate. The protein operates within nucleotide-sugar biosynthesis; UDP-N-acetyl-alpha-D-glucosamine biosynthesis; N-acetyl-alpha-D-glucosamine 1-phosphate from alpha-D-glucosamine 6-phosphate (route II): step 2/2. It functions in the pathway nucleotide-sugar biosynthesis; UDP-N-acetyl-alpha-D-glucosamine biosynthesis; UDP-N-acetyl-alpha-D-glucosamine from N-acetyl-alpha-D-glucosamine 1-phosphate: step 1/1. Its pathway is bacterial outer membrane biogenesis; LPS lipid A biosynthesis. Catalyzes the last two sequential reactions in the de novo biosynthetic pathway for UDP-N-acetylglucosamine (UDP-GlcNAc). The C-terminal domain catalyzes the transfer of acetyl group from acetyl coenzyme A to glucosamine-1-phosphate (GlcN-1-P) to produce N-acetylglucosamine-1-phosphate (GlcNAc-1-P), which is converted into UDP-GlcNAc by the transfer of uridine 5-monophosphate (from uridine 5-triphosphate), a reaction catalyzed by the N-terminal domain. This Streptococcus pyogenes serotype M1 protein is Bifunctional protein GlmU.